Here is a 385-residue protein sequence, read N- to C-terminus: Methylthioribose-1-phosphate isomerase (385 aa).

D256 functions as the Proton donor in the catalytic mechanism.

It belongs to the eIF-2B alpha/beta/delta subunits family. MtnA subfamily.

It is found in the cytoplasm. Its subcellular location is the nucleus. The catalysed reaction is 5-(methylsulfanyl)-alpha-D-ribose 1-phosphate = 5-(methylsulfanyl)-D-ribulose 1-phosphate. It functions in the pathway amino-acid biosynthesis; L-methionine biosynthesis via salvage pathway; L-methionine from S-methyl-5-thio-alpha-D-ribose 1-phosphate: step 1/6. Catalyzes the interconversion of methylthioribose-1-phosphate (MTR-1-P) into methylthioribulose-1-phosphate (MTRu-1-P). The chain is Methylthioribose-1-phosphate isomerase from Arthroderma otae (strain ATCC MYA-4605 / CBS 113480) (Microsporum canis).